Here is a 101-residue protein sequence, read N- to C-terminus: uncharacterized protein (101 aa).

A helical transmembrane segment spans residues 17 to 37 (VIKILLISGISRIIILILAMF).

It is found in the endoplasmic reticulum membrane. This is an uncharacterized protein from Schizosaccharomyces pombe (strain 972 / ATCC 24843) (Fission yeast).